A 310-amino-acid chain; its full sequence is Malate dehydrogenase (310 aa).

NAD(+) is bound by residues 7 to 12 (GAGNVG) and aspartate 32. Positions 81 and 87 each coordinate substrate. NAD(+)-binding positions include asparagine 94 and 117-119 (VSN). Residues asparagine 119 and arginine 150 each coordinate substrate. Histidine 174 serves as the catalytic Proton acceptor.

The protein belongs to the LDH/MDH superfamily. MDH type 3 family. In terms of assembly, homotetramer; arranged as a dimer of dimers.

It catalyses the reaction (S)-malate + NAD(+) = oxaloacetate + NADH + H(+). In terms of biological role, catalyzes the reversible oxidation of malate to oxaloacetate. The protein is Malate dehydrogenase of Chlorobaculum parvum (strain DSM 263 / NCIMB 8327) (Chlorobium vibrioforme subsp. thiosulfatophilum).